Here is a 112-residue protein sequence, read N- to C-terminus: uncharacterized protein (112 aa).

2 coiled-coil regions span residues 15–53 and 86–103; these read AEKK…FFKF and LDYE…TERK.

This is an uncharacterized protein from Aquifex aeolicus (strain VF5).